Reading from the N-terminus, the 1324-residue chain is Myotubularin-related protein DDB_G0290005 (1324 aa).

The segment at 140–276 is disordered; that stretch reads KYHDNTTPNN…TSSTNGNCST (137 aa). Residues 144-180 are compositionally biased toward low complexity; sequence NTTPNNNNNNNNNNNNNNNNTNNNNNNNINKSNNSST. Polar residues predominate over residues 181-194; that stretch reads DQLNSFSLEKQPSQ. A compositionally biased stretch (low complexity) spans 195–222; sequence NENLNNNNNNNNNNNNGNNNINNNNLMN. Over residues 223–247 the composition is skewed to polar residues; it reads SLTQPSTSSRSRLLKSNSTPINLNE. Residues 248-276 are compositionally biased toward low complexity; it reads SSTSTNSPTLSSTTTTTTTTSSTNGNCST. The Myotubularin phosphatase domain occupies 349–807; it reads GWLFYDPIEE…KGVQLWSDYF (459 aa). Substrate-binding positions include 514–515, 575–581, and Arg-621; these read NI and CIDGWDR. Cys-575 functions as the Phosphocysteine intermediate in the catalytic mechanism. 5 disordered regions span residues 624-664, 841-1043, 1066-1110, 1144-1213, and 1232-1296; these read QSIS…TTTS, QKKK…QQQE, EQQE…QQQT, RKQE…LTMP, and LHPN…DNTS. Low complexity-rich tracts occupy residues 625 to 664 and 852 to 864; these read SISS…TTTS and GASG…SGSS. Basic residues predominate over residues 865–882; the sequence is SKHHHHHHHHHHHHHHRK. The segment covering 883–894 has biased composition (basic and acidic residues); that stretch reads STDEKDSKEKSS. Composition is skewed to low complexity over residues 899–914 and 927–973; these read SRTS…STSS and TITT…TTTP. Basic and acidic residues predominate over residues 988–1002; sequence DKLKSPSGDDIKQEQ. Polar residues predominate over residues 1005–1024; it reads MNQFTSQHPNNQMESSSEIN. Residues 1020-1195 are a coiled coil; it reads SSEINQQNEQ…LEQQKPKADI (176 aa). Residues 1025-1043 are compositionally biased toward low complexity; the sequence is QQNEQSQLEQQQEQQQQQE. The segment covering 1079–1090 has biased composition (polar residues); it reads PNETITYSMESD. Residues 1091–1109 are compositionally biased toward low complexity; the sequence is SQSSISQNQNQLQQQQQQQ. Residues 1144–1193 show a composition bias toward basic and acidic residues; sequence RKQEKEKRKLEKEKKQKERAERKLEKEKKRDQKEREQKEKELLEQQKPKA. Residues 1234 to 1243 are compositionally biased toward polar residues; that stretch reads PNLSDQNSQT. 2 stretches are compositionally biased toward low complexity: residues 1244–1258 and 1265–1294; these read NSSG…NSPN and SNLS…NNDN.

It belongs to the protein-tyrosine phosphatase family. Non-receptor class myotubularin subfamily.

It localises to the cytoplasm. Its function is as follows. Phosphatase that acts on lipids with a phosphoinositol headgroup. The polypeptide is Myotubularin-related protein DDB_G0290005 (Dictyostelium discoideum (Social amoeba)).